The sequence spans 308 residues: tRNA pseudouridine synthase B (308 aa).

Asp-46 (nucleophile) is an active-site residue.

This sequence belongs to the pseudouridine synthase TruB family. Type 1 subfamily.

It catalyses the reaction uridine(55) in tRNA = pseudouridine(55) in tRNA. Responsible for synthesis of pseudouridine from uracil-55 in the psi GC loop of transfer RNAs. This is tRNA pseudouridine synthase B from Marinomonas sp. (strain MWYL1).